A 208-amino-acid polypeptide reads, in one-letter code: Uracil phosphoribosyltransferase (208 aa).

Residues R78, R103, and 130-138 (DPMLATGGS) contribute to the 5-phospho-alpha-D-ribose 1-diphosphate site. Uracil is bound by residues I193 and 198 to 200 (GDA). Position 199 (D199) interacts with 5-phospho-alpha-D-ribose 1-diphosphate.

The protein belongs to the UPRTase family. It depends on Mg(2+) as a cofactor.

It carries out the reaction UMP + diphosphate = 5-phospho-alpha-D-ribose 1-diphosphate + uracil. It participates in pyrimidine metabolism; UMP biosynthesis via salvage pathway; UMP from uracil: step 1/1. Its activity is regulated as follows. Allosterically activated by GTP. Its function is as follows. Catalyzes the conversion of uracil and 5-phospho-alpha-D-ribose 1-diphosphate (PRPP) to UMP and diphosphate. The chain is Uracil phosphoribosyltransferase from Tolumonas auensis (strain DSM 9187 / NBRC 110442 / TA 4).